Here is a 230-residue protein sequence, read N- to C-terminus: NAD(P)H-hydrate epimerase (230 aa).

The YjeF N-terminal domain maps to 11–218 (AIAVDQELFN…ALQRKYELNL (208 aa)). 61 to 65 (NNGGD) provides a ligand contact to (6S)-NADPHX. 2 residues coordinate K(+): N62 and D126. Residues 130–136 (GFSFKPP) and D159 each bind (6S)-NADPHX. S162 serves as a coordination point for K(+).

It belongs to the NnrE/AIBP family. K(+) serves as cofactor.

It catalyses the reaction (6R)-NADHX = (6S)-NADHX. It carries out the reaction (6R)-NADPHX = (6S)-NADPHX. Its function is as follows. Catalyzes the epimerization of the S- and R-forms of NAD(P)HX, a damaged form of NAD(P)H that is a result of enzymatic or heat-dependent hydration. This is a prerequisite for the S-specific NAD(P)H-hydrate dehydratase to allow the repair of both epimers of NAD(P)HX. In Drosophila sechellia (Fruit fly), this protein is NAD(P)H-hydrate epimerase.